The chain runs to 778 residues: Melanoma-associated antigen D1 (778 aa).

Disordered stretches follow at residues 41–60 (PTNQ…PTAN), 78–123 (FKVQ…KGPN), and 182–333 (KAWN…PAWQ). At Tyr92 the chain carries Phosphotyrosine. Composition is skewed to polar residues over residues 104–118 (PNTQ…QNAT), 185–211 (NDTT…SQAD), 225–240 (TAQT…NLES), 253–263 (NNLNVEENSSG), and 300–319 (LAWQ…TPPA). A run of 19 repeats spans residues 296–301 (WQTPLA), 302–307 (WQNPSG), 308–313 (WQNQTA), 332–337 (WQNPVA), 338–343 (WQNPVI), 344–349 (WPNPVI), 350–355 (WQNPVI), 356–361 (WPNPIV), 362–367 (WPGPVV), 368–373 (WPNPLA), 374–379 (WQNPPG), 380–385 (WQTPPG), 386–391 (WQTPPG), 392–397 (WQGPPD), 398–403 (WQGPPD), 404–409 (WPLPPD), 410–415 (WPLPPD), 416–421 (WPLPTD), and 422–427 (WPLPPD). A 22 X 6 AA tandem repeats of W-[PQ]-X-P-X-X region spans residues 296–444 (WQTPLAWQNP…IPPDWQNLRP (149 aa)). The disordered stretch occupies residues 376–412 (NPPGWQTPPGWQTPPGWQGPPDWQGPPDWPLPPDWPL). Residues 377–397 (PPGWQTPPGWQTPPGWQGPPD) are compositionally biased toward low complexity. Pro residues predominate over residues 398–412 (WQGPPDWPLPPDWPL). Residues 428–432 (WIPAD) form a 20; approximate repeat. Repeat copies occupy residues 433-438 (WPIPPD) and 439-444 (WQNLRP). Positions 440-455 (QNLRPSPNLRPSPNSR) are enriched in low complexity. A disordered region spans residues 440–466 (QNLRPSPNLRPSPNSRASQNPGAAQPR). Positions 471–669 (LQERANKLVK…RDWTAQFMEA (199 aa)) constitute an MAGE domain.

Interacts with DLX5, DLX7 and MSX2 and forms homomultimers. Interacts with UNC5A. Interacts with TRIM28 and PJA1. Interacts with NGFR/p75NTR and RORA. As to expression, expressed in bone marrow stromal cells from both multiple myeloma patients and healthy donors. Seems to be ubiquitously expressed.

Its subcellular location is the cytoplasm. It is found in the cell membrane. The protein localises to the nucleus. Functionally, involved in the apoptotic response after nerve growth factor (NGF) binding in neuronal cells. Inhibits cell cycle progression, and facilitates NGFR-mediated apoptosis. May act as a regulator of the function of DLX family members. May enhance ubiquitin ligase activity of RING-type zinc finger-containing E3 ubiquitin-protein ligases. Proposed to act through recruitment and/or stabilization of the Ubl-conjugating enzyme (E2) at the E3:substrate complex. Plays a role in the circadian rhythm regulation. May act as RORA co-regulator, modulating the expression of core clock genes such as BMAL1 and NFIL3, induced, or NR1D1, repressed. This is Melanoma-associated antigen D1 (MAGED1) from Homo sapiens (Human).